The primary structure comprises 576 residues: Arginine--tRNA ligase (576 aa).

Positions 122 to 132 (PNVAKEMHVGH) match the 'HIGH' region motif.

This sequence belongs to the class-I aminoacyl-tRNA synthetase family. In terms of assembly, monomer.

The protein localises to the cytoplasm. The catalysed reaction is tRNA(Arg) + L-arginine + ATP = L-arginyl-tRNA(Arg) + AMP + diphosphate. In Sodalis glossinidius (strain morsitans), this protein is Arginine--tRNA ligase.